A 350-amino-acid chain; its full sequence is Phenylalanine--tRNA ligase alpha subunit (350 aa).

Mg(2+) is bound at residue Glu257.

It belongs to the class-II aminoacyl-tRNA synthetase family. Phe-tRNA synthetase alpha subunit type 1 subfamily. As to quaternary structure, tetramer of two alpha and two beta subunits. The cofactor is Mg(2+).

It is found in the cytoplasm. The enzyme catalyses tRNA(Phe) + L-phenylalanine + ATP = L-phenylalanyl-tRNA(Phe) + AMP + diphosphate + H(+). In Listeria welshimeri serovar 6b (strain ATCC 35897 / DSM 20650 / CCUG 15529 / CIP 8149 / NCTC 11857 / SLCC 5334 / V8), this protein is Phenylalanine--tRNA ligase alpha subunit.